The chain runs to 494 residues: Gabija protein GajB (494 aa).

In terms of domain architecture, UvrD-like helicase ATP-binding spans 1-229 (MSREQIIKDG…YHLTSNFRCC (229 aa)). 17–24 (AGAGSGKT) contacts ATP.

This sequence belongs to the helicase family. As to quaternary structure, homodimer. Interacts with GajA; 2 GajB dimers dock at opposite sides of the GajA complex to form a 4:4 GajA-GajB assembly (GajAB). GajAB interacts with Bacillus phage Phi3T Gad1 protein; this interaction forms a 4:4:8 GajAB-Gad1 complex and leads to GajAB inhibition.

Component of antiviral defense system Gabija type I, composed of GajA and GajB. Expression of Gabija type I in B.subtilis (strain BEST7003) confers resistance to phages phi105, phi29, rho14, SpBeta and SBSphiC. Expression of Gabija type I in E.coli B (strain ATCC 11303) confers resistance to phage T7. May be a helicase or contribute to GajA activation. This chain is Gabija protein GajB, found in Bacillus cereus (strain VD045).